The following is a 156-amino-acid chain: ATP synthase subunit b (156 aa).

A helical membrane pass occupies residues 7-27 (LIGQTIAFIVFVWFCMKFVWP).

The protein belongs to the ATPase B chain family. F-type ATPases have 2 components, F(1) - the catalytic core - and F(0) - the membrane proton channel. F(1) has five subunits: alpha(3), beta(3), gamma(1), delta(1), epsilon(1). F(0) has three main subunits: a(1), b(2) and c(10-14). The alpha and beta chains form an alternating ring which encloses part of the gamma chain. F(1) is attached to F(0) by a central stalk formed by the gamma and epsilon chains, while a peripheral stalk is formed by the delta and b chains.

Its subcellular location is the cell inner membrane. In terms of biological role, f(1)F(0) ATP synthase produces ATP from ADP in the presence of a proton or sodium gradient. F-type ATPases consist of two structural domains, F(1) containing the extramembraneous catalytic core and F(0) containing the membrane proton channel, linked together by a central stalk and a peripheral stalk. During catalysis, ATP synthesis in the catalytic domain of F(1) is coupled via a rotary mechanism of the central stalk subunits to proton translocation. Component of the F(0) channel, it forms part of the peripheral stalk, linking F(1) to F(0). This chain is ATP synthase subunit b, found in Idiomarina loihiensis (strain ATCC BAA-735 / DSM 15497 / L2-TR).